Here is a 440-residue protein sequence, read N- to C-terminus: Chromosomal replication initiator protein DnaA (440 aa).

The tract at residues 1 to 72 (MTELDSLWEA…KEFAQRELGR (72 aa)) is domain I, interacts with DnaA modulators. The interval 72–103 (RNIEPHYVLEGEFTYTNKKTEDDPTPSFEMDT) is domain II. A domain III, AAA+ region region spans residues 104–320 (PLNPHYNFGT…GALTKVQAFA (217 aa)). The ATP site is built by G148, G150, K151, and T152. Residues 321 to 440 (NLSGERITPS…ITKLKAKLRS (120 aa)) form a domain IV, binds dsDNA region.

The protein belongs to the DnaA family. In terms of assembly, oligomerizes as a right-handed, spiral filament on DNA at oriC.

It localises to the cytoplasm. Plays an essential role in the initiation and regulation of chromosomal replication. ATP-DnaA binds to the origin of replication (oriC) to initiate formation of the DNA replication initiation complex once per cell cycle. Binds the DnaA box (a 9 base pair repeat at the origin) and separates the double-stranded (ds)DNA. Forms a right-handed helical filament on oriC DNA; dsDNA binds to the exterior of the filament while single-stranded (ss)DNA is stabiized in the filament's interior. The ATP-DnaA-oriC complex binds and stabilizes one strand of the AT-rich DNA unwinding element (DUE), permitting loading of DNA polymerase. After initiation quickly degrades to an ADP-DnaA complex that is not apt for DNA replication. Binds acidic phospholipids. The sequence is that of Chromosomal replication initiator protein DnaA from Limosilactobacillus reuteri (strain DSM 20016) (Lactobacillus reuteri).